Reading from the N-terminus, the 463-residue chain is ATP-dependent protease ATPase subunit HslU (463 aa).

ATP-binding positions include Val-19, 61-66, Asp-277, Glu-341, and Arg-413; that span reads GVGKTE.

This sequence belongs to the ClpX chaperone family. HslU subfamily. As to quaternary structure, a double ring-shaped homohexamer of HslV is capped on each side by a ring-shaped HslU homohexamer. The assembly of the HslU/HslV complex is dependent on binding of ATP.

It is found in the cytoplasm. Its function is as follows. ATPase subunit of a proteasome-like degradation complex; this subunit has chaperone activity. The binding of ATP and its subsequent hydrolysis by HslU are essential for unfolding of protein substrates subsequently hydrolyzed by HslV. HslU recognizes the N-terminal part of its protein substrates and unfolds these before they are guided to HslV for hydrolysis. The chain is ATP-dependent protease ATPase subunit HslU from Shouchella clausii (strain KSM-K16) (Alkalihalobacillus clausii).